The chain runs to 34 residues: Stromal 70 kDa heat shock-related protein, chloroplastic (34 aa).

The protein belongs to the heat shock protein 70 family.

The protein localises to the plastid. It is found in the chloroplast stroma. In terms of biological role, interacts with newly imported chloroplast proteins to assist in their maturation. The chain is Stromal 70 kDa heat shock-related protein, chloroplastic from Cucurbita maxima (Pumpkin).